Consider the following 66-residue polypeptide: Large ribosomal subunit protein bL33c (66 aa).

The protein belongs to the bacterial ribosomal protein bL33 family.

The protein resides in the plastid. It localises to the chloroplast. The chain is Large ribosomal subunit protein bL33c from Oryza nivara (Indian wild rice).